A 420-amino-acid chain; its full sequence is Glutamate-1-semialdehyde 2,1-aminomutase (420 aa).

At Lys259 the chain carries N6-(pyridoxal phosphate)lysine.

This sequence belongs to the class-III pyridoxal-phosphate-dependent aminotransferase family. HemL subfamily. Pyridoxal 5'-phosphate is required as a cofactor.

It localises to the cytoplasm. It carries out the reaction (S)-4-amino-5-oxopentanoate = 5-aminolevulinate. It participates in porphyrin-containing compound metabolism; protoporphyrin-IX biosynthesis; 5-aminolevulinate from L-glutamyl-tRNA(Glu): step 2/2. The chain is Glutamate-1-semialdehyde 2,1-aminomutase from Sulfolobus acidocaldarius (strain ATCC 33909 / DSM 639 / JCM 8929 / NBRC 15157 / NCIMB 11770).